Here is a 1037-residue protein sequence, read N- to C-terminus: Receptor kinase-like protein Xa21 (1037 aa).

The N-terminal stretch at 1 to 24 (MARSPTSVMISSLLLLLLIGPASS) is a signal peptide. Residues 25 to 665 (DDAAAAAAAR…LLENRKHFPV (641 aa)) lie on the Extracellular side of the membrane. N-linked (GlcNAc...) asparagine glycosylation is found at Asn66, Asn101, and Asn112. 11 LRR repeats span residues 89 to 112 (PHRV…SLGN), 113 to 137 (LSFL…LSRL), 138 to 161 (SRLQ…IGAC), 163 to 185 (KLTS…IGAS), 187 to 210 (KHLS…LGNL), 211 to 234 (TSLQ…LGQL), 236 to 259 (SSLL…IWNL), 260 to 283 (SSLR…AFKT), 285 to 308 (HLLE…VANA), 310 to 331 (HLTQ…GFGR), and 333 to 355 (RNLT…DWGF). Asn209 is a glycosylation site (N-linked (GlcNAc...) asparagine). Residues Asn247 and Asn258 are each glycosylated (N-linked (GlcNAc...) asparagine). The N-linked (GlcNAc...) asparagine glycan is linked to Asn307. Residues Asn334, Asn361, and Asn385 are each glycosylated (N-linked (GlcNAc...) asparagine). 11 LRR repeats span residues 362–385 (CSKL…SFSN), 387–411 (STSL…IGNL), 412–435 (IGLQ…LGRL), 437–459 (NLGI…IGNL), 460–482 (TELN…TLSN), 483–507 (LTNL…LFNI), 509–532 (TLSI…IGHL), 533–556 (KNLV…LGDC), 557–580 (QLLR…LGQL), 581–604 (KGLE…LADI), and 606–629 (MLHS…AFAD). 5 N-linked (GlcNAc...) asparagine glycosylation sites follow: Asn447, Asn458, Asn482, Asn495, and Asn515. 2 N-linked (GlcNAc...) asparagine glycosylation sites follow: Asn592 and Asn611. The chain crosses the membrane as a helical span at residues 666 to 686 (LPISVSLVAALAILSSLYLLI). The Cytoplasmic segment spans residues 687-1037 (TWHKRTKKGA…PVCEGASLEF (351 aa)). The short motif at 689-694 (HKRTKK) is the Nuclear localization signal element. The residue at position 698 (Ser698) is a Phosphoserine. Thr700 is subject to Phosphothreonine. Ser701 is subject to Phosphoserine. Thr717 is subject to Phosphothreonine. A Protein kinase domain is found at 720-1019 (FAPTNLLGSG…GDIIDELNAI (300 aa)). ATP-binding positions include 726–734 (LGSGSFGSV) and Lys748. Catalysis depends on Asp854, which acts as the Proton acceptor.

This sequence belongs to the protein kinase superfamily. Ser/Thr protein kinase family. In terms of assembly, interacts with WRKY62/XB10 in the nucleus. Interacts with SERK2. Mn(2+) serves as cofactor. It depends on Mg(2+) as a cofactor. In terms of processing, undergoes protein cleavage upon X.oryzae pv. oryzae protein Ax21 detection, thus releasing the processed protein kinase Xa21 chain. Autophosphorylated on serine and threonine residues; these phosphorylation prevents proteolytic degradation.

Its subcellular location is the cell membrane. The protein resides in the endoplasmic reticulum membrane. The protein localises to the nucleus. It carries out the reaction L-seryl-[protein] + ATP = O-phospho-L-seryl-[protein] + ADP + H(+). It catalyses the reaction L-threonyl-[protein] + ATP = O-phospho-L-threonyl-[protein] + ADP + H(+). In terms of biological role, receptor kinase that detects X.oryzae pv. oryzae protein Ax21 to promote innate immunity. Following X.oryzae pv. oryzae protein Ax21 detection, undergoes cleavage, releasing the processed protein kinase Xa21 chain. The processed protein kinase Xa21 chain released by protein cleavage after X.oryzae pv. oryzae protein Ax21 detection translocates into the nucleus where it can bind and regulate WRKY62, a transcription factor. Confers resistance to the bacterial pathogen X.oryzae pv. oryzae (Xoo). The chain is Receptor kinase-like protein Xa21 from Oryza sativa subsp. japonica (Rice).